A 247-amino-acid chain; its full sequence is 14-3-3 protein gamma-1 (247 aa).

Belongs to the 14-3-3 family. In terms of assembly, homodimer, and heterodimer with other family members.

The protein localises to the cytoplasm. Functionally, adapter protein implicated in the regulation of a large spectrum of both general and specialized signaling pathways. Binds to a large number of partners, usually by recognition of a phosphoserine or phosphothreonine motif. Binding generally results in the modulation of the activity of the binding partner. The polypeptide is 14-3-3 protein gamma-1 (ywhag1) (Danio rerio (Zebrafish)).